A 745-amino-acid polypeptide reads, in one-letter code: Phosphoribosylformylglycinamidine synthase subunit PurL (745 aa).

Histidine 50 is an active-site residue. 2 residues coordinate ATP: tyrosine 53 and lysine 92. Glutamate 94 is a binding site for Mg(2+). Residues 95–98 (SHNH) and arginine 117 contribute to the substrate site. The Proton acceptor role is filled by histidine 96. Position 118 (aspartate 118) interacts with Mg(2+). Glutamine 241 is a substrate binding site. Aspartate 269 lines the Mg(2+) pocket. 313–315 (ESQ) serves as a coordination point for substrate. Positions 495 and 532 each coordinate ATP. Asparagine 533 lines the Mg(2+) pocket. Serine 535 is a binding site for substrate.

The protein belongs to the FGAMS family. Monomer. Part of the FGAM synthase complex composed of 1 PurL, 1 PurQ and 2 PurS subunits.

The protein resides in the cytoplasm. It catalyses the reaction N(2)-formyl-N(1)-(5-phospho-beta-D-ribosyl)glycinamide + L-glutamine + ATP + H2O = 2-formamido-N(1)-(5-O-phospho-beta-D-ribosyl)acetamidine + L-glutamate + ADP + phosphate + H(+). It functions in the pathway purine metabolism; IMP biosynthesis via de novo pathway; 5-amino-1-(5-phospho-D-ribosyl)imidazole from N(2)-formyl-N(1)-(5-phospho-D-ribosyl)glycinamide: step 1/2. Functionally, part of the phosphoribosylformylglycinamidine synthase complex involved in the purines biosynthetic pathway. Catalyzes the ATP-dependent conversion of formylglycinamide ribonucleotide (FGAR) and glutamine to yield formylglycinamidine ribonucleotide (FGAM) and glutamate. The FGAM synthase complex is composed of three subunits. PurQ produces an ammonia molecule by converting glutamine to glutamate. PurL transfers the ammonia molecule to FGAR to form FGAM in an ATP-dependent manner. PurS interacts with PurQ and PurL and is thought to assist in the transfer of the ammonia molecule from PurQ to PurL. This is Phosphoribosylformylglycinamidine synthase subunit PurL from Allorhizobium ampelinum (strain ATCC BAA-846 / DSM 112012 / S4) (Agrobacterium vitis (strain S4)).